Here is a 471-residue protein sequence, read N- to C-terminus: Abscisic acid 8'-hydroxylase 1 (471 aa).

The chain crosses the membrane as a helical span at residues 1 to 21 (MGAFLLFVCVLAPFLLVCAVR). Position 415 (cysteine 415) interacts with heme.

Belongs to the cytochrome P450 family. Heme serves as cofactor. In terms of tissue distribution, in seedlings and expanding leaves.

It localises to the membrane. It carries out the reaction 2-cis-(+)-abscisate + reduced [NADPH--hemoprotein reductase] + O2 = (+)-8'-hydroxyabscisate + oxidized [NADPH--hemoprotein reductase] + H2O + H(+). Its pathway is plant hormone degradation; abscisic acid degradation. Involved in the oxidative degradation of abscisic acid. This Oryza sativa subsp. indica (Rice) protein is Abscisic acid 8'-hydroxylase 1 (CYP707A5).